We begin with the raw amino-acid sequence, 84 residues long: Neurotoxin BmK-M11 (84 aa).

An N-terminal signal peptide occupies residues M1 to S19. Positions R21–H83 constitute an LCN-type CS-alpha/beta domain. 4 disulfides stabilise this stretch: C31-C82, C35-C55, C41-C65, and C45-C67. A propeptide (removed by a carboxypeptidase) is located at residue R84.

This sequence belongs to the long (4 C-C) scorpion toxin superfamily. Sodium channel inhibitor family. Alpha subfamily. In terms of tissue distribution, expressed by the venom gland.

The protein resides in the secreted. Its function is as follows. Alpha toxins bind voltage-independently at site-3 of sodium channels (Nav) and inhibit the inactivation of the activated channels, thereby blocking neuronal transmission. This recombinant toxin selectively inhibits the fast inactivation of mNav1.4/SCN4A (EC(50)=82.3 nM) (tested in HEK293 cells). The polypeptide is Neurotoxin BmK-M11 (Olivierus martensii (Manchurian scorpion)).